Reading from the N-terminus, the 157-residue chain is uncharacterized protein (157 aa).

Positions 36–63 (QIEELNELCQFFNISLTYTRESLEELEN) form a coiled coil.

This is an uncharacterized protein from Bacillus subtilis (strain 168).